A 211-amino-acid polypeptide reads, in one-letter code: Uridine kinase (211 aa).

Gly-12 to Thr-19 is an ATP binding site.

This sequence belongs to the uridine kinase family.

The protein localises to the cytoplasm. The enzyme catalyses uridine + ATP = UMP + ADP + H(+). It catalyses the reaction cytidine + ATP = CMP + ADP + H(+). It participates in pyrimidine metabolism; CTP biosynthesis via salvage pathway; CTP from cytidine: step 1/3. Its pathway is pyrimidine metabolism; UMP biosynthesis via salvage pathway; UMP from uridine: step 1/1. In Anoxybacillus flavithermus (strain DSM 21510 / WK1), this protein is Uridine kinase.